The primary structure comprises 151 residues: 3-dehydroquinate dehydratase (151 aa).

Residue tyrosine 26 is the Proton acceptor of the active site. Residues asparagine 75, histidine 81, and aspartate 88 each coordinate substrate. Histidine 101 serves as the catalytic Proton donor. Substrate contacts are provided by residues 102 to 103 (LS) and arginine 112.

It belongs to the type-II 3-dehydroquinase family. Homododecamer.

The enzyme catalyses 3-dehydroquinate = 3-dehydroshikimate + H2O. It participates in metabolic intermediate biosynthesis; chorismate biosynthesis; chorismate from D-erythrose 4-phosphate and phosphoenolpyruvate: step 3/7. In terms of biological role, catalyzes a trans-dehydration via an enolate intermediate. The chain is 3-dehydroquinate dehydratase from Shewanella sediminis (strain HAW-EB3).